Reading from the N-terminus, the 565-residue chain is UV-stimulated scaffold protein A homolog (565 aa).

The VHS-like stretch occupies residues 11–156 (RKNLNRILQE…VTLRKTKFVD (146 aa)). The stretch at 155–215 (VDYENGEKKI…ELETTMEMLV (61 aa)) forms a coiled coil. Residues 441 to 468 (DRECLAKLPSGALCKRKDMFKCPLHGPL) form a UVSSA-type zinc finger. 4 residues coordinate Zn(2+): Cys444, Cys454, Cys462, and His465. Residues 480–510 (DEDRLKEIDRKERKRLKEAEEFSRKIVKEYE) are a coiled coil. 2 disordered regions span residues 510–530 (ESKTKRKRKHEEETSVRSRLQ) and 542–565 (VSADITSQQRSRLEKNFSHQFSHL).

It belongs to the UVSSA family.

The protein resides in the chromosome. Its function is as follows. Factor involved in transcription-coupled nucleotide excision repair (TC-NER) in response to UV damage. TC-NER allows RNA polymerase II-blocking lesions to be rapidly removed from the transcribed strand of active genes. The chain is UV-stimulated scaffold protein A homolog from Caenorhabditis briggsae.